Reading from the N-terminus, the 61-residue chain is Small ribosomal subunit protein uS14 (61 aa).

Residues C24, C27, C40, and C43 each contribute to the Zn(2+) site.

This sequence belongs to the universal ribosomal protein uS14 family. Zinc-binding uS14 subfamily. Part of the 30S ribosomal subunit. Contacts proteins S3 and S10. Zn(2+) serves as cofactor.

Its function is as follows. Binds 16S rRNA, required for the assembly of 30S particles and may also be responsible for determining the conformation of the 16S rRNA at the A site. The polypeptide is Small ribosomal subunit protein uS14 (Borrelia garinii subsp. bavariensis (strain ATCC BAA-2496 / DSM 23469 / PBi) (Borreliella bavariensis)).